We begin with the raw amino-acid sequence, 166 residues long: Small ribosomal subunit protein uS5 (166 aa).

In terms of domain architecture, S5 DRBM spans 11-74 (LEDRVVAINR…EDAKKNLVEV (64 aa)).

The protein belongs to the universal ribosomal protein uS5 family. Part of the 30S ribosomal subunit. Contacts proteins S4 and S8.

With S4 and S12 plays an important role in translational accuracy. Functionally, located at the back of the 30S subunit body where it stabilizes the conformation of the head with respect to the body. This is Small ribosomal subunit protein uS5 from Enterococcus faecalis (strain ATCC 700802 / V583).